We begin with the raw amino-acid sequence, 1086 residues long: Tyrosine-protein kinase receptor svh-2 (1086 aa).

The signal sequence occupies residues methionine 1–glycine 34. Topologically, residues glycine 35–lysine 651 are extracellular. 5 N-linked (GlcNAc...) asparagine glycosylation sites follow: asparagine 276, asparagine 299, asparagine 461, asparagine 554, and asparagine 617. A helical membrane pass occupies residues isoleucine 652–tyrosine 672. The Cytoplasmic segment spans residues methionine 673–valine 1086. The Protein kinase domain maps to valine 735–valine 996. ATP-binding positions include isoleucine 741–valine 749 and lysine 767. Aspartate 858 serves as the catalytic Proton acceptor. At tyrosine 890 the chain carries Phosphotyrosine. The tract at residues alanine 1056–valine 1086 is disordered. The segment covering aspartate 1061–valine 1086 has biased composition (polar residues).

This sequence belongs to the protein kinase superfamily. Tyr protein kinase family. Interacts (via cytoplasmic domain) with mlk-1. Interacts with shc-1 (via SH2 domain). May interact (when tyrosine-phosphorylated) with tns-1 (via SH2 domain). In terms of processing, may be autophosphorylated on Tyr-890 following dimerization. In terms of tissue distribution, expressed in body wall and vulva muscles, pharynx, intestine, excretory canals, distal tip cells and some neurons. Expressed in D-type motor neurons upon axon injury.

Its subcellular location is the cell membrane. It carries out the reaction L-tyrosyl-[protein] + ATP = O-phospho-L-tyrosyl-[protein] + ADP + H(+). Functionally, receptor tyrosine kinase which may phosphorylate mlk-1, a component of the mlk-1, mek-1 and kgb-1 pathway. Involved in axon regeneration after injury by promoting the generation of productive and stable growth cones. This is Tyrosine-protein kinase receptor svh-2 from Caenorhabditis elegans.